A 96-amino-acid chain; its full sequence is UPF0235 protein YPN_3141 (96 aa).

It belongs to the UPF0235 family.

The sequence is that of UPF0235 protein YPN_3141 from Yersinia pestis bv. Antiqua (strain Nepal516).